A 349-amino-acid polypeptide reads, in one-letter code: Peroxidase 7 (349 aa).

The signal sequence occupies residues 1–22; that stretch reads MKLAVVSVVVILGVLVAWPVSA. Intrachain disulfides connect Cys60–Cys136, Cys93–Cys98, Cys142–Cys341, and Cys220–Cys252. Catalysis depends on His91, which acts as the Proton acceptor. The Ca(2+) site is built by Asp92, Val95, Gly97, Asp99, and Ser101. Pro183 is a binding site for substrate. His213 is a binding site for heme b. Thr214 is a Ca(2+) binding site. Residue Asn231 is glycosylated (N-linked (GlcNAc...) asparagine). Residues Asp262, Thr265, and Asp270 each coordinate Ca(2+).

Belongs to the peroxidase family. Classical plant (class III) peroxidase subfamily. It depends on heme b as a cofactor. Ca(2+) serves as cofactor.

It localises to the secreted. The enzyme catalyses 2 a phenolic donor + H2O2 = 2 a phenolic radical donor + 2 H2O. Removal of H(2)O(2), oxidation of toxic reductants, biosynthesis and degradation of lignin, suberization, auxin catabolism, response to environmental stresses such as wounding, pathogen attack and oxidative stress. These functions might be dependent on each isozyme/isoform in each plant tissue. The polypeptide is Peroxidase 7 (PER7) (Arabidopsis thaliana (Mouse-ear cress)).